A 276-amino-acid chain; its full sequence is Phosphatidylglycerol--prolipoprotein diacylglyceryl transferase (276 aa).

3 consecutive transmembrane segments (helical) span residues 17–37, 63–83, and 95–115; these read LAIHWYGLTYLAAFGLFFFLA, ILFLGVMGVVIGGRLGYCLFY, and ILAVWQGGMSFHGGMLGVLAS. Arg-146 provides a ligand contact to a 1,2-diacyl-sn-glycero-3-phospho-(1'-sn-glycerol). 3 helical membrane-spanning segments follow: residues 182–202, 209–229, and 235–255; these read SQVYQFLLEGLLLFVLLWLYA, GQVSGAFLVGYGVFRFIAEYF, and FLGILALGLSMGQWLCVPMIV.

Belongs to the Lgt family.

Its subcellular location is the cell inner membrane. It catalyses the reaction L-cysteinyl-[prolipoprotein] + a 1,2-diacyl-sn-glycero-3-phospho-(1'-sn-glycerol) = an S-1,2-diacyl-sn-glyceryl-L-cysteinyl-[prolipoprotein] + sn-glycerol 1-phosphate + H(+). Its pathway is protein modification; lipoprotein biosynthesis (diacylglyceryl transfer). In terms of biological role, catalyzes the transfer of the diacylglyceryl group from phosphatidylglycerol to the sulfhydryl group of the N-terminal cysteine of a prolipoprotein, the first step in the formation of mature lipoproteins. The protein is Phosphatidylglycerol--prolipoprotein diacylglyceryl transferase of Polaromonas sp. (strain JS666 / ATCC BAA-500).